A 142-amino-acid polypeptide reads, in one-letter code: 3-hydroxyacyl-[acyl-carrier-protein] dehydratase FabZ (142 aa).

Residue histidine 46 is part of the active site.

This sequence belongs to the thioester dehydratase family. FabZ subfamily.

Its subcellular location is the cytoplasm. It carries out the reaction a (3R)-hydroxyacyl-[ACP] = a (2E)-enoyl-[ACP] + H2O. Functionally, involved in unsaturated fatty acids biosynthesis. Catalyzes the dehydration of short chain beta-hydroxyacyl-ACPs and long chain saturated and unsaturated beta-hydroxyacyl-ACPs. The sequence is that of 3-hydroxyacyl-[acyl-carrier-protein] dehydratase FabZ from Thermus thermophilus (strain ATCC BAA-163 / DSM 7039 / HB27).